Consider the following 827-residue polypeptide: Stage II sporulation protein E (827 aa).

The next 10 membrane-spanning stretches (helical) occupy residues 49-69 (IGFL…ALPF), 71-91 (GAML…VLAG), 116-136 (VAAF…FFSM), 142-162 (GFVY…AIVE), 175-195 (QSLP…EEII), 206-226 (TGLA…ARYV), 247-267 (GLIL…LAFS), 269-289 (LLGG…LIVG), 299-319 (GSAG…LFLL), and 320-340 (TPQS…EHLQ). Residues 341–827 (EQQQYARKIR…AIFQNKQEIS (487 aa)) are Cytoplasmic-facing. The 211-residue stretch at 594-804 (STGAAHAAKG…DDMTVVVVRI (211 aa)) folds into the PPM-type phosphatase domain.

Mn(2+) serves as cofactor.

The protein localises to the cell membrane. It carries out the reaction O-phospho-L-seryl-[protein] + H2O = L-seryl-[protein] + phosphate. It catalyses the reaction O-phospho-L-threonyl-[protein] + H2O = L-threonyl-[protein] + phosphate. Its function is as follows. Normally needed for pro-sigma E processing during sporulation but can be bypassed in vegetative cells. Activates SpoIIAA by dephosphorylation. The chain is Stage II sporulation protein E (spoIIE) from Bacillus subtilis (strain 168).